A 317-amino-acid polypeptide reads, in one-letter code: Ornithine carbamoyltransferase (317 aa).

Residues 57–60, Gln84, Arg108, and 135–138 contribute to the carbamoyl phosphate site; these read STRT and HPCQ. Residues Asn166, Asp230, and 234-235 contribute to the L-ornithine site; that span reads SM. Carbamoyl phosphate is bound by residues 270–271 and Arg298; that span reads CL.

It belongs to the aspartate/ornithine carbamoyltransferase superfamily. OTCase family. Homododecamer.

It localises to the cytoplasm. It carries out the reaction carbamoyl phosphate + L-ornithine = L-citrulline + phosphate + H(+). It functions in the pathway amino-acid biosynthesis; L-arginine biosynthesis; L-arginine from L-ornithine and carbamoyl phosphate: step 1/3. Its function is as follows. Reversibly catalyzes the transfer of the carbamoyl group from carbamoyl phosphate (CP) to the N(epsilon) atom of ornithine (ORN) to produce L-citrulline. The sequence is that of Ornithine carbamoyltransferase from Pyrococcus abyssi (strain GE5 / Orsay).